Reading from the N-terminus, the 298-residue chain is Max-like protein X (298 aa).

Positions 1–63 are disordered; it reads MTEPGASPED…ARGCREDSSH (63 aa). Phosphoserine is present on Ser7. The segment covering 28–37 has biased composition (basic residues); the sequence is GRARARRGSG. Ser45, Ser48, Ser74, Ser77, and Ser98 each carry phosphoserine. Positions 98–109 are enriched in polar residues; sequence SIGSTSASSVPN. The interval 98–119 is disordered; sequence SIGSTSASSVPNTDDEDSDYQQ. The region spanning 129 to 187 is the bHLH domain; sequence RRRRAHTQAEQKRRDAIKRGYDDLQTIVPTCQQQDFSIGSQKLSKAIVLQKTIDYIQFL. Residues 194-214 form a leucine-zipper region; it reads QEEEVSTLRKDVTALKIMKVN.

Efficient DNA binding requires dimerization with another bHLH protein. Binds DNA as a heterodimer with MAD1, MAD4, MNT, WBSCR14 and MLXIP. Can also bind DNA as a homodimer. As to expression, expressed in all tissues examined: stomach, duodenum, jejunum, ileum, colon, liver, pancreas, salivary gland, kidney, spleen, lung, heart, skeletal muscle, brain, ovary and testis.

The protein resides in the cytoplasm. The protein localises to the nucleus. Transcription regulator. Forms a sequence-specific DNA-binding protein complex with MAD1, MAD4, MNT, WBSCR14 and MLXIP which recognizes the core sequence 5'-CACGTG-3'. The TCFL4-MAD1, TCFL4-MAD4, TCFL4-WBSCR14 complexes are transcriptional repressors. Plays a role in transcriptional activation of glycolytic target genes. Involved in glucose-responsive gene regulation. This Mus musculus (Mouse) protein is Max-like protein X (Mlx).